We begin with the raw amino-acid sequence, 317 residues long: Malate dehydrogenase (317 aa).

NAD(+) contacts are provided by residues 13-18 (GAGNIG) and D38. The substrate site is built by R87 and R93. Residues N100 and 123 to 125 (VTN) contribute to the NAD(+) site. 2 residues coordinate substrate: N125 and R156. The active-site Proton acceptor is H180.

Belongs to the LDH/MDH superfamily. MDH type 3 family.

The enzyme catalyses (S)-malate + NAD(+) = oxaloacetate + NADH + H(+). Functionally, catalyzes the reversible oxidation of malate to oxaloacetate. This is Malate dehydrogenase from Anaplasma marginale (strain Florida).